The chain runs to 230 residues: AA9 family lytic polysaccharide monooxygenase H (230 aa).

The N-terminal stretch at 1 to 17 (MKTLSAGLLALASAASA) is a signal peptide. The Cu(2+) site is built by His18 and His89. Residues Cys59 and Cys178 are joined by a disulfide bond. Residues His164 and Gln173 each coordinate O2. Tyr175 is a Cu(2+) binding site.

It belongs to the polysaccharide monooxygenase AA9 family. It depends on Cu(2+) as a cofactor.

The protein resides in the secreted. The enzyme catalyses [(1-&gt;4)-beta-D-glucosyl]n+m + reduced acceptor + O2 = 4-dehydro-beta-D-glucosyl-[(1-&gt;4)-beta-D-glucosyl]n-1 + [(1-&gt;4)-beta-D-glucosyl]m + acceptor + H2O.. In terms of biological role, lytic polysaccharide monooxygenase (LPMO) that depolymerizes crystalline and amorphous polysaccharides via the oxidation of scissile alpha- or beta-(1-4)-glycosidic bonds, yielding primarly C1 oxidation products. Catalysis by LPMOs requires the reduction of the active-site copper from Cu(II) to Cu(I) by a reducing agent and H(2)O(2) or O(2) as a cosubstrate. Active on hemicelluloses, including xylan, glucomannan, and xyloglucan. Preferentially cleaves residual xylan in phosphoric acid-swollen cellulose (PASC). Moreover, when exposed to cellulose-xylan blends, shows a preference for xylan and for releasing oxidized xylooligosaccharides. Has no activity on ivory nut mannan (INM), a linear beta-1,4-linked mannan without substitutions. In Malbranchea cinnamomea (Thermophilic fungus), this protein is AA9 family lytic polysaccharide monooxygenase H.